The primary structure comprises 68 residues: Metallothionein-3 (68 aa).

Met1 is subject to N-acetylmethionine. A beta region spans residues 1–30; that stretch reads MDPETCPCPTGGSCTCSDPCKCEGCTCASS. Residues Cys6, Cys8, Cys14, Cys16, Cys20, Cys22, Cys25, and Cys27 each contribute to the a divalent metal cation site. An alpha region spans residues 31–68; it reads KKSCCSCCPAECEKCAKDCVCKGGEGAEAEEKKCSCCQ. Ser33 is modified (phosphoserine). The a divalent metal cation site is built by Cys34, Cys35, Cys37, Cys38, Cys42, Cys45, Cys49, Cys51, Cys64, Cys66, and Cys67.

It belongs to the metallothionein superfamily. Type 1 family.

In terms of biological role, binds heavy metals. Contains five zinc and one copper atoms per polypeptide chain and only a negligible amount of cadmium. This Bos mutus grunniens (Wild yak) protein is Metallothionein-3 (MT3).